The chain runs to 189 residues: HGPRTase-like protein 2 (189 aa).

It belongs to the purine/pyrimidine phosphoribosyltransferase family. Archaeal HPRT subfamily.

In terms of biological role, may catalyze a purine salvage reaction, the substrate is unknown. In Halalkalicoccus jeotgali (strain DSM 18796 / CECT 7217 / JCM 14584 / KCTC 4019 / B3), this protein is HGPRTase-like protein 2.